A 177-amino-acid chain; its full sequence is Protein C2-DOMAIN ABA-RELATED 4 (177 aa).

Positions 4-118 constitute a C2 domain; it reads ACPARTSSLM…LRMQLDGLPS (115 aa). Positions 33, 34, 39, 85, 86, 87, and 93 each coordinate Ca(2+).

It belongs to the plant CAR protein family. Dimers and oligomers. Binds to PYR/PYL/RCAR abscisic acid intracellular receptors in an ABA-independent manner, both at the plasma membrane and in the nucleus. Interacts directly with PYR1, PYL1, PYL4, PYL6 and PYL8. Binds phospholipids in a Ca(2+)-dependent manner. Interacts with YchF1. The cofactor is Ca(2+).

Its subcellular location is the cell membrane. The protein resides in the nucleus. The protein localises to the cytoplasm. It localises to the cytosol. Functionally, mediates the transient calcium-dependent interaction of PYR/PYL/RCAR abscisic acid (ABA) receptors with the plasma membrane and thus regulates ABA sensitivity. Stimulates the GTPase/ATPase activities of YchF1, and regulates its subcellular localization. Promotes tolerance towards salinity stress by limiting the accumulation of reactive oxygen species (ROS). Promotes resistance to bacterial pathogens (e.g. Xanthomonas oryzae pv. oryzae and P.syringae pv. tomato DC3000). Binds liposomes in the absence of exogenous Ca(2+), but this activity is enhanced in the presence of Ca(2+) and generates membrane curvature. The sequence is that of Protein C2-DOMAIN ABA-RELATED 4 from Arabidopsis thaliana (Mouse-ear cress).